A 1033-amino-acid polypeptide reads, in one-letter code: Potassium-transporting ATPase alpha chain 2 (1033 aa).

The Cytoplasmic portion of the chain corresponds to 1–96 (MRRKTLEIYS…NALSPPKQTP (96 aa)). A helical transmembrane segment spans residues 97-117 (EIIKFLKQMIGGFSILLWVGA). At 118–140 (ILCWIAYGIQYASNQSGSLDNVY) the chain is on the lumenal side. A helical membrane pass occupies residues 141–161 (LGVVLALVVILTGIFAYYQEA). Over 162 to 297 (KSTNIMSSFS…NEKTPIATEI (136 aa)) the chain is Cytoplasmic. The helical transmembrane segment at 298–317 (EHFVHIVAGVAVSIGILFFI) threads the bilayer. At 318–329 (IAVSLKYRVLDS) the chain is on the lumenal side. Residues 330–347 (IIFLIGIIVANVPEGLLA) traverse the membrane as a helical segment. At 348-781 (TVTVTLSLTA…EEGRLIFDNL (434 aa)) the chain is on the cytoplasmic side. Aspartate 385 functions as the 4-aspartylphosphate intermediate in the catalytic mechanism. 2 residues coordinate Mg(2+): aspartate 726 and aspartate 730. A helical membrane pass occupies residues 782–801 (KKTIAYTLTKNIAELCPFLV). Residues 802-811 (YIIVGLPLPI) are Lumenal-facing. A helical membrane pass occupies residues 812–832 (GTITILFIDLGTDIIPSIALA). Topologically, residues 833-852 (YEKVESDIMNRKPRHKKKDR) are cytoplasmic. The helical transmembrane segment at 853–875 (LVNHQLAIYSYLHIGLMQALGAF) threads the bilayer. Residues 876-927 (LVYFTVYAQQGFWPTSLIQLRVKWEQDYVNDLEDSYGQQWTRYQRKYLEWTG) are Lumenal-facing. The chain crosses the membrane as a helical span at residues 928 to 947 (YTAFFVGIMVQQIADLIIRK). The Cytoplasmic portion of the chain corresponds to 948–961 (TRRNSIFQQGLFRN). At serine 952 the chain carries Phosphoserine; by PKA. A helical membrane pass occupies residues 962–980 (KVIWVGITSQIIVALILSC). Residues 981–995 (GLGSITALNFTMLRV) lie on the Lumenal side of the membrane. The helical transmembrane segment at 996–1016 (QYWFVAVPHAILIWVYDEVRK) threads the bilayer. Topologically, residues 1017 to 1033 (LFLRLYPGSWWDKNMYY) are cytoplasmic.

The protein belongs to the cation transport ATPase (P-type) (TC 3.A.3) family. Type IIC subfamily. As to quaternary structure, composed of two subunits: alpha (catalytic) and beta. Found in skin, kidney and distal colon.

Its subcellular location is the membrane. It catalyses the reaction K(+)(out) + ATP + H2O + H(+)(in) = K(+)(in) + ADP + phosphate + 2 H(+)(out). In terms of biological role, catalyzes the hydrolysis of ATP coupled with the exchange of H(+) and K(+) ions across the plasma membrane. Responsible for potassium absorption in various tissues. In Cavia porcellus (Guinea pig), this protein is Potassium-transporting ATPase alpha chain 2 (ATP12A).